The following is a 445-amino-acid chain: MGKGDALTPKQIANKIKAKGLQRLRWYCQLCEKQCRDENGFKCHISSESHMRQMEVFSNKSSFIVSQYSKEFEEDFLRIMSRQFINSRVPANQVYAEYIKDRHHIHMNATEWTSLTEFVKYLGKTSKCEVEETPKGWFIRYINRDPEYVMRKVSEEKKEKAELNEEERQRLQIEKQIKELNKNKIEQDEIKPTELSKEDLEKMSLLELNIKSTTNTTTTTTNTTTTTTNKNIFDKLKTNDNNSSNNNYNDQTNPKPYAKKMSAIEEIMFKEKEKERQQKEKLEFEKQQQQQQQQQQQQQQQQQQQQQQQQQQQQQQQQQQQQLNSNNNNNEEKPWIIKDIVIKIIDKELANGKYFKQKGYIVSVENEFLAKVKLLDSGDILKIDQTFLETVIPQIGSTVIIVNGKYRGKEATIKNVNFDDFNAKLYIKDNDITITLPYESFSKQY.

The C2H2-type zinc finger occupies 26–50 (WYCQLCEKQCRDENGFKCHISSESH). Low complexity-rich tracts occupy residues 215–229 (NTTT…TTTN) and 239–253 (NDNN…DQTN). The segment at 215–256 (NTTTTTTNTTTTTTNKNIFDKLKTNDNNSSNNNYNDQTNPKP) is disordered.

Belongs to the KIN17 family.

The sequence is that of KIN17-like protein from Dictyostelium discoideum (Social amoeba).